The following is a 156-amino-acid chain: Cytochrome c-type biogenesis protein CcmE (156 aa).

The Cytoplasmic portion of the chain corresponds to 1–16 (MNATKAPGGIKPKHQR). The helical; Signal-anchor for type II membrane protein transmembrane segment at 17 to 37 (LVLLVIALVALIGAGLLAAYA) threads the bilayer. Residues 38-156 (LSNQASYFYV…QAEAVVAETK (119 aa)) lie on the Periplasmic side of the membrane. Heme contacts are provided by histidine 131 and tyrosine 135.

The protein belongs to the CcmE/CycJ family.

Its subcellular location is the cell inner membrane. In terms of biological role, heme chaperone required for the biogenesis of c-type cytochromes. Transiently binds heme delivered by CcmC and transfers the heme to apo-cytochromes in a process facilitated by CcmF and CcmH. The chain is Cytochrome c-type biogenesis protein CcmE from Novosphingobium aromaticivorans (strain ATCC 700278 / DSM 12444 / CCUG 56034 / CIP 105152 / NBRC 16084 / F199).